The sequence spans 242 residues: Sugar fermentation stimulation protein homolog (242 aa).

It belongs to the SfsA family.

This Methanosphaera stadtmanae (strain ATCC 43021 / DSM 3091 / JCM 11832 / MCB-3) protein is Sugar fermentation stimulation protein homolog.